The sequence spans 2489 residues: Protein YPR117W (2489 aa).

2 helical membrane-spanning segments follow: residues 19–39 (FMLF…WILM) and 128–148 (VLSI…LALT). Residues N191, N210, N311, N452, N468, N605, N638, N663, N698, N789, N835, N981, N1255, N1404, and N1476 are each glycosylated (N-linked (GlcNAc...) asparagine). Residues 1610 to 1676 (LTQEKLATER…RLHTVNTILS (67 aa)) are a coiled coil. The interval 1685–1704 (PGGNTDGDSSSSLSDTDVNL) is disordered. A compositionally biased stretch (low complexity) spans 1690-1704 (DGDSSSSLSDTDVNL). N-linked (GlcNAc...) asparagine glycans are attached at residues N1978 and N2189. S2254 and S2278 each carry phosphoserine. N2279 carries an N-linked (GlcNAc...) asparagine glycan. Over residues 2451–2471 (SSTHSSDIRSINSDETYNEND) the composition is skewed to polar residues. The disordered stretch occupies residues 2451–2489 (SSTHSSDIRSINSDETYNENDGNGVKPFYPVTSEFSKNK).

It localises to the cell membrane. The protein resides in the endoplasmic reticulum membrane. The protein localises to the mitochondrion membrane. In terms of biological role, tube-forming lipid transport protein which may bind to phosphatidylinositols and may affect phosphatidylinositol-4,5-bisphosphate (PtdIns-4,5-P2) distribution. The protein is Protein YPR117W of Saccharomyces cerevisiae (strain ATCC 204508 / S288c) (Baker's yeast).